A 124-amino-acid chain; its full sequence is Small ribosomal subunit protein uS13 (124 aa).

Positions valine 98–lysine 124 are disordered.

The protein belongs to the universal ribosomal protein uS13 family. As to quaternary structure, part of the 30S ribosomal subunit. Forms a loose heterodimer with protein S19. Forms two bridges to the 50S subunit in the 70S ribosome.

Located at the top of the head of the 30S subunit, it contacts several helices of the 16S rRNA. In the 70S ribosome it contacts the 23S rRNA (bridge B1a) and protein L5 of the 50S subunit (bridge B1b), connecting the 2 subunits; these bridges are implicated in subunit movement. Contacts the tRNAs in the A and P-sites. In Dictyoglomus turgidum (strain DSM 6724 / Z-1310), this protein is Small ribosomal subunit protein uS13.